A 290-amino-acid chain; its full sequence is PIH1 domain-containing protein 1 (290 aa).

Over residues 34–50 (ELQQAQTSRPESTQIQP) the composition is skewed to polar residues. Residues 34–53 (ELQQAQTSRPESTQIQPQPG) form a disordered region. Residue S173 is modified to Phosphoserine.

The protein belongs to the PIH1 family. In terms of assembly, component of the R2TP complex composed at least of RUVBL1, RUVBL2, RPAP3 and PIHD1. Component of the PAQosome complex which is responsible for the biogenesis of several protein complexes and which consists of R2TP complex members RUVBL1, RUVBL2, RPAP3 and PIH1D1, URI complex members PFDN2, PFDN6, PDRG1, UXT and URI1 as well as ASDURF, POLR2E and DNAAF10/WDR92. Interacts with phosphorylated TELO2 and mediates interaction of TELO2 with the R2TP complex. Interacts with phosphorylated ECD, EFTUD2/SNRP116, RPB1 and UBR5 and with RPB1 in a phosphorylation-independent manner. Interacts with the core C/D box snoRNP particle components NOP58 and FBL and with RUVBL1/TIP49. Interacts with RPAP3 and DNAAF10. Interacts with histone H4 and with SWI/SNF complex member SMARCB1/SNF5. Interacts with the mTORC1 complex member RPTOR. Interacts with MSL1.

The protein localises to the nucleus. Its function is as follows. Involved in the assembly of C/D box small nucleolar ribonucleoprotein (snoRNP) particles. Recruits the SWI/SNF complex to the core promoter of rRNA genes and enhances pre-rRNA transcription. Mediates interaction of TELO2 with the R2TP complex which is necessary for the stability of MTOR and SMG1. Positively regulates the assembly and activity of the mTORC1 complex. The protein is PIH1 domain-containing protein 1 (PIH1D1) of Bos taurus (Bovine).